A 359-amino-acid polypeptide reads, in one-letter code: Endoglucanase 1 (359 aa).

2 disordered regions span residues Met-1 to Arg-26 and Thr-47 to Thr-72. The span at Leu-13–Gly-24 shows a compositional bias: basic residues. A compositionally biased stretch (low complexity) spans Ala-60 to Thr-72. Residue Asp-154 is part of the active site. Residues Cys-155 and Cys-199 are joined by a disulfide bond. Asp-192 (proton donor) is an active-site residue. The active-site Nucleophile is the Asp-339.

This sequence belongs to the glycosyl hydrolase 6 (cellulase B) family.

The enzyme catalyses Endohydrolysis of (1-&gt;4)-beta-D-glucosidic linkages in cellulose, lichenin and cereal beta-D-glucans.. CMCase I preferentially hydrolyzes carboxymethyl cellulose (CMC). This Streptomyces sp. (strain KSM-9) protein is Endoglucanase 1 (casA).